A 1040-amino-acid polypeptide reads, in one-letter code: Multidrug resistance protein MdtB (1040 aa).

The next 12 membrane-spanning stretches (helical) occupy residues 16–36, 347–367, 369–389, 396–416, 440–460, 472–492, 537–557, 863–883, 888–908, 911–931, 968–988, and 998–1018; these read FIMR…AGII, LMMA…NIPA, IIPG…MVFL, LTLM…IVVI, IGFT…PLLF, FAIT…TLTP, WLTL…WVFI, LGST…VLGI, FIHP…ALLA, IAGS…IGIV, ILMT…STGV, and IGMV…TPVI.

Belongs to the resistance-nodulation-cell division (RND) (TC 2.A.6) family. MdtB subfamily. As to quaternary structure, part of a tripartite efflux system composed of MdtA, MdtB and MdtC. MdtB forms a heteromultimer with MdtC.

It is found in the cell inner membrane. The polypeptide is Multidrug resistance protein MdtB (Shigella boydii serotype 4 (strain Sb227)).